Reading from the N-terminus, the 72-residue chain is Translation initiation factor IF-1 (72 aa).

Positions 1–72 (MAKEETIQMQ…SRARITFRAK (72 aa)) constitute an S1-like domain.

It belongs to the IF-1 family. Component of the 30S ribosomal translation pre-initiation complex which assembles on the 30S ribosome in the order IF-2 and IF-3, IF-1 and N-formylmethionyl-tRNA(fMet); mRNA recruitment can occur at any time during PIC assembly.

The protein resides in the cytoplasm. In terms of biological role, one of the essential components for the initiation of protein synthesis. Stabilizes the binding of IF-2 and IF-3 on the 30S subunit to which N-formylmethionyl-tRNA(fMet) subsequently binds. Helps modulate mRNA selection, yielding the 30S pre-initiation complex (PIC). Upon addition of the 50S ribosomal subunit IF-1, IF-2 and IF-3 are released leaving the mature 70S translation initiation complex. This chain is Translation initiation factor IF-1, found in Nitrosospira multiformis (strain ATCC 25196 / NCIMB 11849 / C 71).